Here is a 397-residue protein sequence, read N- to C-terminus: Elongation factor Tu (397 aa).

Residues 10–207 form the tr-type G domain; it reads KPHVNIGTIG…AVDESIPEPV (198 aa). The tract at residues 19-26 is G1; it reads GHVDHGKT. A GTP-binding site is contributed by 19–26; sequence GHVDHGKT. Mg(2+) is bound at residue Thr-26. The tract at residues 63-67 is G2; sequence GITIN. The interval 84–87 is G3; sequence DAPG. GTP contacts are provided by residues 84–88 and 139–142; these read DAPGH and NKSD. The segment at 139-142 is G4; it reads NKSD. The interval 177 to 179 is G5; that stretch reads SGL.

Belongs to the TRAFAC class translation factor GTPase superfamily. Classic translation factor GTPase family. EF-Tu/EF-1A subfamily. Monomer.

The protein localises to the cytoplasm. The catalysed reaction is GTP + H2O = GDP + phosphate + H(+). GTP hydrolase that promotes the GTP-dependent binding of aminoacyl-tRNA to the A-site of ribosomes during protein biosynthesis. This is Elongation factor Tu from Clavibacter michiganensis subsp. michiganensis (strain NCPPB 382).